We begin with the raw amino-acid sequence, 114 residues long: T cell receptor alpha variable 10 (114 aa).

The first 21 residues, methionine 1–glycine 21, serve as a signal peptide directing secretion. The Ig-like domain occupies asparagine 23–serine 114. Residues asparagine 39 and asparagine 45 are each glycosylated (N-linked (GlcNAc...) asparagine). An intrachain disulfide couples cysteine 44 to cysteine 111.

In terms of assembly, alpha-beta TR is a heterodimer composed of an alpha and beta chain; disulfide-linked. The alpha-beta TR is associated with the transmembrane signaling CD3 coreceptor proteins to form the TR-CD3 (TcR or TCR). The assembly of alpha-beta TR heterodimers with CD3 occurs in the endoplasmic reticulum where a single alpha-beta TR heterodimer associates with one CD3D-CD3E heterodimer, one CD3G-CD3E heterodimer and one CD247 homodimer forming a stable octameric structure. CD3D-CD3E and CD3G-CD3E heterodimers preferentially associate with TR alpha and TR beta chains, respectively. The association of the CD247 homodimer is the last step of TcR assembly in the endoplasmic reticulum and is required for transport to the cell surface.

It localises to the cell membrane. Its function is as follows. V region of the variable domain of T cell receptor (TR) alpha chain that participates in the antigen recognition. Alpha-beta T cell receptors are antigen specific receptors which are essential to the immune response and are present on the cell surface of T lymphocytes. Recognize peptide-major histocompatibility (MH) (pMH) complexes that are displayed by antigen presenting cells (APC), a prerequisite for efficient T cell adaptive immunity against pathogens. Binding of alpha-beta TR to pMH complex initiates TR-CD3 clustering on the cell surface and intracellular activation of LCK that phosphorylates the ITAM motifs of CD3G, CD3D, CD3E and CD247 enabling the recruitment of ZAP70. In turn ZAP70 phosphorylates LAT, which recruits numerous signaling molecules to form the LAT signalosome. The LAT signalosome propagates signal branching to three major signaling pathways, the calcium, the mitogen-activated protein kinase (MAPK) kinase and the nuclear factor NF-kappa-B (NF-kB) pathways, leading to the mobilization of transcription factors that are critical for gene expression and essential for T cell growth and differentiation. The T cell repertoire is generated in the thymus, by V-(D)-J rearrangement. This repertoire is then shaped by intrathymic selection events to generate a peripheral T cell pool of self-MH restricted, non-autoaggressive T cells. Post-thymic interaction of alpha-beta TR with the pMH complexes shapes TR structural and functional avidity. This Homo sapiens (Human) protein is T cell receptor alpha variable 10.